The following is a 382-amino-acid chain: MLRWTVHLEGGPRRVNHAAVAVGHRVYSFGGYCSGEDYETLRQIDVHIFNAVSLRWTKLPPVKSAIRGQAPVVPYMRYGHSTVLIDDTVLLWGGRNDTEGACNVLYAFDVNTHKWFTPRVSGTVPGARDGHSACVLGKIMYIFGGYEQQADCFSNDIHKLDTSTMTWTLICTKGSPARWRDFHSATMLGSHMYVFGGRADRFGPFHSNNEIYCNRIRVFDTRTEAWLDCPPTPVLPEGRRSHSAFGYNGELYIFGGYNARLNRHFHDLWKFNPVSFTWKKIEPKGKGPCPRRRQCCCIVGDKIVLFGGTSPSPEEGLGDEFDLIDHSDLHILDFSPSLKTLCKLAVIQYNLDQSCLPHDIRWELNAMTTNSNISRPIVSSHG.

5 Kelch repeats span residues 25 to 77, 88 to 138, 139 to 189, 191 to 249, and 251 to 301; these read RVYS…PYMR, TVLL…VLGK, IMYI…TMLG, HMYV…GYNG, and LYIF…IVGD.

In terms of assembly, component of a CRL2(KLHDC3) complex, also named ECS(KLHDC3) complex, composed of CUL2, Elongin BC (ELOB and ELOC), RBX1 and substrate-specific adapter KLHDC3. May form oligomers as a KLHDC3-ELOB-ELOC complex; this interaction is likely autoinhibitory for the E3 ligase complex.

The protein resides in the cytoplasm. It participates in protein modification; protein ubiquitination. Its function is as follows. Substrate-recognition component of a Cul2-RING (CRL2) E3 ubiquitin-protein ligase complex of the DesCEND (destruction via C-end degrons) pathway, which recognizes a C-degron located at the extreme C terminus of target proteins, leading to their ubiquitination and degradation. The C-degron recognized by the DesCEND pathway is usually a motif of less than ten residues and can be present in full-length proteins, truncated proteins or proteolytically cleaved forms. The CRL2(KLHDC3) complex specifically recognizes proteins with a glycine (Gly) at the C-terminus, leading to their ubiquitination and degradation: recognizes the C-terminal -Arg-(Xaa)n-Arg-Gly, -Arg-(Xaa)n-Lys-Gly, and -Arg-(Xaa)n-Gln-Gly degrons. The CRL2(KLHDC3) complex mediates ubiquitination and degradation of truncated SELENOV and SEPHS2 selenoproteins produced by failed UGA/Sec decoding, which end with a glycine. May be involved in meiotic recombination process. The chain is Kelch domain-containing protein 3 from Homo sapiens (Human).